Reading from the N-terminus, the 98-residue chain is NADH-ubiquinone oxidoreductase chain 4L (98 aa).

A run of 3 helical transmembrane segments spans residues 1 to 21, 29 to 49, and 61 to 81; these read MSLT…GLLL, SLLC…MIIL, and IILL…LVMV.

This sequence belongs to the complex I subunit 4L family. Core subunit of respiratory chain NADH dehydrogenase (Complex I) which is composed of 45 different subunits.

The protein resides in the mitochondrion inner membrane. The enzyme catalyses a ubiquinone + NADH + 5 H(+)(in) = a ubiquinol + NAD(+) + 4 H(+)(out). Its function is as follows. Core subunit of the mitochondrial membrane respiratory chain NADH dehydrogenase (Complex I) which catalyzes electron transfer from NADH through the respiratory chain, using ubiquinone as an electron acceptor. Part of the enzyme membrane arm which is embedded in the lipid bilayer and involved in proton translocation. This is NADH-ubiquinone oxidoreductase chain 4L (MT-ND4L) from Platyrrhinus brachycephalus (Short-headed broad-nosed bat).